The sequence spans 219 residues: N-(5'-phosphoribosyl)anthranilate isomerase (219 aa).

Belongs to the TrpF family.

The enzyme catalyses N-(5-phospho-beta-D-ribosyl)anthranilate = 1-(2-carboxyphenylamino)-1-deoxy-D-ribulose 5-phosphate. It participates in amino-acid biosynthesis; L-tryptophan biosynthesis; L-tryptophan from chorismate: step 3/5. The polypeptide is N-(5'-phosphoribosyl)anthranilate isomerase (Chloroherpeton thalassium (strain ATCC 35110 / GB-78)).